The sequence spans 159 residues: E3 ubiquitin ligase complex SCF subunit sconC (159 aa).

The interval 101 to 159 is interaction with the F-box domain of F-box proteins; that stretch reads ILAANYLDIKALLDVGCKTVANMIKGKSPEEIRKTFNIQNDFTPEEEDQIRRENEWAEE.

The protein belongs to the SKP1 family. As to quaternary structure, component of the SCF (SKP1-CUL1-F-box protein) E3 ubiquitin ligase complexes.

The protein operates within protein modification; protein ubiquitination. Its function is as follows. Essential component of the SCF (SKP1-CUL1-F-box protein) E3 ubiquitin ligase complexes, which mediate the ubiquitination and subsequent proteasomal degradation of target proteins. Controls sulfur metabolite repression, probably by mediating the inactivation or degradation of the metR transcription factor. The sequence is that of E3 ubiquitin ligase complex SCF subunit sconC (sconC) from Aspergillus clavatus (strain ATCC 1007 / CBS 513.65 / DSM 816 / NCTC 3887 / NRRL 1 / QM 1276 / 107).